The primary structure comprises 641 residues: Probable potassium transport system protein Kup (641 aa).

A compositionally biased stretch (polar residues) spans M1–G14. The tract at residues M1–D20 is disordered. 12 helical membrane passes run L29–F49, I69–I89, V120–P140, P156–V176, F188–I208, V236–H256, F267–L287, L307–F327, V355–F375, A384–M404, W410–F430, and I437–T457.

This sequence belongs to the HAK/KUP transporter (TC 2.A.72) family.

The protein localises to the cell inner membrane. It carries out the reaction K(+)(in) + H(+)(in) = K(+)(out) + H(+)(out). Its function is as follows. Transport of potassium into the cell. Likely operates as a K(+):H(+) symporter. This Nitrosomonas eutropha (strain DSM 101675 / C91 / Nm57) protein is Probable potassium transport system protein Kup.